We begin with the raw amino-acid sequence, 678 residues long: Glycine--tRNA ligase beta subunit (678 aa).

This sequence belongs to the class-II aminoacyl-tRNA synthetase family. As to quaternary structure, tetramer of two alpha and two beta subunits.

Its subcellular location is the cytoplasm. It carries out the reaction tRNA(Gly) + glycine + ATP = glycyl-tRNA(Gly) + AMP + diphosphate. The chain is Glycine--tRNA ligase beta subunit from Streptococcus pneumoniae (strain ATCC 700669 / Spain 23F-1).